Here is a 102-residue protein sequence, read N- to C-terminus: Large ribosomal subunit protein uL24 (102 aa).

The disordered stretch occupies residues histidine 44 to serine 65.

It belongs to the universal ribosomal protein uL24 family. Part of the 50S ribosomal subunit.

Functionally, one of two assembly initiator proteins, it binds directly to the 5'-end of the 23S rRNA, where it nucleates assembly of the 50S subunit. In terms of biological role, one of the proteins that surrounds the polypeptide exit tunnel on the outside of the subunit. The protein is Large ribosomal subunit protein uL24 of Shouchella clausii (strain KSM-K16) (Alkalihalobacillus clausii).